The chain runs to 239 residues: Exosome complex component Rrp41 (239 aa).

The tract at residues 1–21 is disordered; sequence MEERPERLISEDGLRLDGRKP.

Belongs to the RNase PH family. Rrp41 subfamily. In terms of assembly, component of the archaeal exosome complex. Forms a hexameric ring-like arrangement composed of 3 Rrp41-Rrp42 heterodimers. The hexameric ring associates with a trimer of Rrp4 and/or Csl4 subunits.

The protein localises to the cytoplasm. Its function is as follows. Catalytic component of the exosome, which is a complex involved in RNA degradation. Has 3'-&gt;5' exoribonuclease activity. Can also synthesize heteromeric RNA-tails. The chain is Exosome complex component Rrp41 from Methanopyrus kandleri (strain AV19 / DSM 6324 / JCM 9639 / NBRC 100938).